The chain runs to 607 residues: Aspartate--tRNA(Asp/Asn) ligase (607 aa).

Glu-176 contacts L-aspartate. An aspartate region spans residues Gln-200–Lys-203. The L-aspartate site is built by Arg-222 and His-456. Arg-222 to Glu-224 contacts ATP. Glu-496 contributes to the ATP binding site. An L-aspartate-binding site is contributed by Arg-503. Gly-548 to Arg-551 contributes to the ATP binding site.

Belongs to the class-II aminoacyl-tRNA synthetase family. Type 1 subfamily. As to quaternary structure, homodimer.

It localises to the cytoplasm. It catalyses the reaction tRNA(Asx) + L-aspartate + ATP = L-aspartyl-tRNA(Asx) + AMP + diphosphate. Its function is as follows. Aspartyl-tRNA synthetase with relaxed tRNA specificity since it is able to aspartylate not only its cognate tRNA(Asp) but also tRNA(Asn). Reaction proceeds in two steps: L-aspartate is first activated by ATP to form Asp-AMP and then transferred to the acceptor end of tRNA(Asp/Asn). This is Aspartate--tRNA(Asp/Asn) ligase from Parvibaculum lavamentivorans (strain DS-1 / DSM 13023 / NCIMB 13966).